The primary structure comprises 318 residues: Ribosomal RNA small subunit methyltransferase A (318 aa).

Residues asparagine 40, valine 42, glycine 67, glutamate 88, aspartate 118, and asparagine 137 each contribute to the S-adenosyl-L-methionine site. Over residues 295-305 (SADRGGTDREG) the composition is skewed to basic and acidic residues. Residues 295–318 (SADRGGTDREGTSPPTAGQGAPAR) form a disordered region.

Belongs to the class I-like SAM-binding methyltransferase superfamily. rRNA adenine N(6)-methyltransferase family. RsmA subfamily.

Its subcellular location is the cytoplasm. The enzyme catalyses adenosine(1518)/adenosine(1519) in 16S rRNA + 4 S-adenosyl-L-methionine = N(6)-dimethyladenosine(1518)/N(6)-dimethyladenosine(1519) in 16S rRNA + 4 S-adenosyl-L-homocysteine + 4 H(+). Functionally, specifically dimethylates two adjacent adenosines (A1518 and A1519) in the loop of a conserved hairpin near the 3'-end of 16S rRNA in the 30S particle. May play a critical role in biogenesis of 30S subunits. The chain is Ribosomal RNA small subunit methyltransferase A from Mycolicibacterium paratuberculosis (strain ATCC BAA-968 / K-10) (Mycobacterium paratuberculosis).